The sequence spans 230 residues: Small ribosomal subunit protein uS3 (230 aa).

Residues 39–107 form the KH type-2 domain; sequence IRKFLTEKLK…PAQINISEVR (69 aa).

This sequence belongs to the universal ribosomal protein uS3 family. As to quaternary structure, part of the 30S ribosomal subunit. Forms a tight complex with proteins S10 and S14.

Its function is as follows. Binds the lower part of the 30S subunit head. Binds mRNA in the 70S ribosome, positioning it for translation. The polypeptide is Small ribosomal subunit protein uS3 (Psychromonas ingrahamii (strain DSM 17664 / CCUG 51855 / 37)).